A 370-amino-acid chain; its full sequence is uncharacterized protein (370 aa).

D152, H154, D184, N215, H306, and H308 together coordinate a divalent metal cation.

The protein belongs to the metallophosphoesterase superfamily. The cofactor is a divalent metal cation.

This is an uncharacterized protein from Helicobacter pylori (strain ATCC 700392 / 26695) (Campylobacter pylori).